The primary structure comprises 521 residues: MSFSRSEAAPAAPLPDLAATLAAPRDDAFQQLGAAFVTRLPAAPLPAPYVVGFSDDAARMLGLEPALRDAPGFAELFCGNPTRDWPQASLPYASVYSGHQFGVWAGQLGDGRALTIGELAHDGRRYELQLKGAGRTPYSRMGDGRAVLRSSIREFLCSEAMHHLGIPTTRALAVIGSDQPVVREEIETSAVVTRVAQSFVRFGHFEHFFANDRPEQLRALADHVIERFYPACRDADDPYLALLAEATRRTAELVAQWQAVGFCHGVMNTDNMSILGLTIDYGPFGFIDAFDAKHVCNHSDTQGRYAYRMQPRIAHWNCFCLAQALLPLIGLHRDAPSEDARAERAVEDAHAVLGRFPEQFGPALERAMRAKLGLALEREGDAALANQLLEIMDASHADFTLTFRHLARVSKHDARGDAPVRDLFIDRDAFDRWANLYRARLSEEARDDASRAAAMNRVNPKYVLRNHLAETAIRRAKEKDFSEVERLAAVLRRPFDEQLEHDAYAALPPDWASTLEVSCSS.

Gly-109, Gly-111, Arg-112, Lys-131, Asp-143, Gly-144, Arg-194, and Arg-201 together coordinate ATP. Asp-270 functions as the Proton acceptor in the catalytic mechanism. Residues Asn-271 and Asp-280 each coordinate Mg(2+). Asp-280 is an ATP binding site.

It belongs to the SELO family. Mg(2+) is required as a cofactor. The cofactor is Mn(2+).

It catalyses the reaction L-seryl-[protein] + ATP = 3-O-(5'-adenylyl)-L-seryl-[protein] + diphosphate. The catalysed reaction is L-threonyl-[protein] + ATP = 3-O-(5'-adenylyl)-L-threonyl-[protein] + diphosphate. It carries out the reaction L-tyrosyl-[protein] + ATP = O-(5'-adenylyl)-L-tyrosyl-[protein] + diphosphate. The enzyme catalyses L-histidyl-[protein] + UTP = N(tele)-(5'-uridylyl)-L-histidyl-[protein] + diphosphate. It catalyses the reaction L-seryl-[protein] + UTP = O-(5'-uridylyl)-L-seryl-[protein] + diphosphate. The catalysed reaction is L-tyrosyl-[protein] + UTP = O-(5'-uridylyl)-L-tyrosyl-[protein] + diphosphate. Its function is as follows. Nucleotidyltransferase involved in the post-translational modification of proteins. It can catalyze the addition of adenosine monophosphate (AMP) or uridine monophosphate (UMP) to a protein, resulting in modifications known as AMPylation and UMPylation. In Burkholderia pseudomallei (strain 1106a), this protein is Protein nucleotidyltransferase YdiU.